The chain runs to 154 residues: MASRDTPPATSYAPPDVPSGVAALFLTIPFAFFLPELVFGFWVWTLVAATHVAYPLLQGWVLYVSLTSFLISLMFLMSYLFGFYKRFESWRVLDSLYHGTTGILYMSASVLQAYATIISEGHNLSHYYINVAASFFAFLTTLLYILHAFSIYYH.

Helical transmembrane passes span 24 to 44, 61 to 81, 99 to 119, and 131 to 151; these read LFLT…FWVW, VLYV…SYLF, GTTG…TIIS, and VAAS…AFSI. An MARVEL domain is found at 24–154; sequence LFLTIPFAFF…ILHAFSIYYH (131 aa).

This sequence belongs to the MAL family.

The protein resides in the membrane. The chain is MAL-like protein (Mall) from Mus musculus (Mouse).